Reading from the N-terminus, the 97-residue chain is Large ribosomal subunit protein eL21 (97 aa).

This sequence belongs to the eukaryotic ribosomal protein eL21 family.

The protein is Large ribosomal subunit protein eL21 of Methanococcus aeolicus (strain ATCC BAA-1280 / DSM 17508 / OCM 812 / Nankai-3).